The primary structure comprises 182 residues: Large ribosomal subunit protein uL6 (182 aa).

Belongs to the universal ribosomal protein uL6 family. As to quaternary structure, part of the 50S ribosomal subunit.

Functionally, this protein binds to the 23S rRNA, and is important in its secondary structure. It is located near the subunit interface in the base of the L7/L12 stalk, and near the tRNA binding site of the peptidyltransferase center. The sequence is that of Large ribosomal subunit protein uL6 from Caldicellulosiruptor bescii (strain ATCC BAA-1888 / DSM 6725 / KCTC 15123 / Z-1320) (Anaerocellum thermophilum).